The primary structure comprises 231 residues: uncharacterized protein (231 aa).

The chain crosses the membrane as a helical span at residues 86 to 106; the sequence is LIILFVIGLIITIIGLLMYEP.

It is found in the membrane. This is an uncharacterized protein from Methanocaldococcus jannaschii (strain ATCC 43067 / DSM 2661 / JAL-1 / JCM 10045 / NBRC 100440) (Methanococcus jannaschii).